The chain runs to 1132 residues: Rho GTPase-activating protein gacE (1132 aa).

The Rho-GAP domain maps to 76 to 262; sequence LEMNKILKSE…FLISNYLNVF (187 aa). Disordered regions lie at residues 279–354 and 472–517; these read NELL…SSPI and NSTT…SLIN. Residues 281-301 show a composition bias toward low complexity; sequence LLNNNNNNNNVIMPTTTTTTT. Over residues 302–311 the composition is skewed to polar residues; sequence SASSSILPTD. 3 stretches are compositionally biased toward low complexity: residues 328–354, 473–498, and 507–517; these read SIPL…SSPI, STTT…STTT, and SNSASNNSLIN.

It localises to the cytoplasm. In terms of biological role, rho GTPase-activating protein involved in the signal transduction pathway. In Dictyostelium discoideum (Social amoeba), this protein is Rho GTPase-activating protein gacE (gacE).